An 846-amino-acid polypeptide reads, in one-letter code: Neurofilament medium polypeptide (846 aa).

The span at 1-10 (MSYTLDSLGN) shows a compositional bias: polar residues. The disordered stretch occupies residues 1 to 52 (MSYTLDSLGNPSAYRRVPTETRSSFSRVSGSPSSGFRSQSWSRGSPSTVSSS). Serine 2 carries the N-acetylserine modification. Residues 2–104 (SYTLDSLGNP…LSRSNEKEQL (103 aa)) form a head region. The span at 22 to 45 (RSSFSRVSGSPSSGFRSQSWSRGS) shows a compositional bias: low complexity. Residue serine 31 is modified to Phosphoserine. The residue at position 43 (arginine 43) is an Omega-N-methylarginine. Threonine 48 carries an O-linked (GlcNAc) threonine glycan. The residue at position 98 (serine 98) is a Phosphoserine. The 312-residue stretch at 100–411 (EKEQLQGLND…KLLEGEETRF (312 aa)) folds into the IF rod domain. A coil 1A region spans residues 104 to 135 (LQGLNDRFAGYIEKVHYLEQQNKEIEAEIHAL). Residues 136–148 (RQKQASHAQLGDA) are linker 1. The tract at residues 149 to 247 (YDQEIRELRA…EEEVADLLAQ (99 aa)) is coil 1B. At serine 225 the chain carries Phosphoserine. Residues 248 to 264 (IQASHITVERKDYLKTD) form a linker 12 region. The coil 2A stretch occupies residues 265 to 286 (ISTALKEIRSQLECHSDQNMHQ). Positions 287 to 290 (AEEW) are linker 2. The interval 291–411 (FKCRYAKLTE…KLLEGEETRF (121 aa)) is coil 2B. A Phosphotyrosine modification is found at tyrosine 319. Residues serine 345, serine 417, and serine 429 each carry the phosphoserine modification. Positions 412–845 (STFSGSITGP…HAIVKEVTQG (434 aa)) are tail. Residue threonine 431 is glycosylated (O-linked (GlcNAc) threonine). 2 positions are modified to phosphoserine: serine 467 and serine 483. The segment at 483-783 (SAKEEKEEAE…GEDRSDDKVV (301 aa)) is disordered. The segment covering 489-499 (EEAEEKEEEPE) has biased composition (acidic residues). Basic and acidic residues predominate over residues 500–510 (VEKSPVKSPEA). Phosphoserine is present on residues serine 503 and serine 507. Residues 511–533 (KEEEEGEKEEEEEGQEEEEEEDE) show a composition bias toward acidic residues. A compositionally biased stretch (basic and acidic residues) spans 534–553 (GVKSDQAEEGGSEKEGSSEK). 4 positions are modified to phosphoserine: serine 537, serine 545, serine 550, and serine 551. Residues 554–575 (DEGEQEEEGETEAEGEGEEAEA) are compositionally biased toward acidic residues. The residue at position 564 (threonine 564) is a Phosphothreonine. Residues 576–603 (KEEKKTEGKVEEMAIKEEIKVEKPEKAK) show a composition bias toward basic and acidic residues. Serine 604, serine 609, serine 643, serine 667, serine 687, serine 713, serine 721, serine 751, and serine 767 each carry phosphoserine. Composition is skewed to basic and acidic residues over residues 610–675 (PVEE…KAVE) and 687–709 (SLEKDTKEEKPQQQEKVKEKAEE). 2 stretches are compositionally biased toward basic and acidic residues: residues 718 to 730 (GDKSPQESKKEDI) and 746 to 758 (TQEKGSGQEEEKG). A compositionally biased stretch (basic and acidic residues) spans 769–783 (AEEKKGEDRSDDKVV).

This sequence belongs to the intermediate filament family. As to quaternary structure, forms heterodimers with NEFL; which can further hetero-oligomerize (in vitro). Forms heterodimers with INA (in vitro). Post-translationally, there are a number of repeats of the tripeptide K-S-P, NFM is phosphorylated on a number of the serines in this motif. It is thought that phosphorylation of NFM results in the formation of interfilament cross bridges that are important in the maintenance of axonal caliber. Phosphorylation seems to play a major role in the functioning of the larger neurofilament polypeptides (NF-M and NF-H), the levels of phosphorylation being altered developmentally and coincidentally with a change in the neurofilament function. In terms of processing, phosphorylated in the head and rod regions by the PKC kinase PKN1, leading to the inhibition of polymerization. As to expression, expressed in the dorsal root ganglion neurons (at protein level).

The protein resides in the cytoplasm. It localises to the cytoskeleton. It is found in the cell projection. The protein localises to the axon. Neurofilaments usually contain three intermediate filament proteins: NEFL, NEFM, and NEFH which are involved in the maintenance of neuronal caliber. May additionally cooperate with the neuronal intermediate filament proteins PRPH and INA to form neuronal filamentous networks. This Rattus norvegicus (Rat) protein is Neurofilament medium polypeptide (Nefm).